Here is a 118-residue protein sequence, read N- to C-terminus: Thioredoxin H5 (118 aa).

Residue alanine 2 is modified to N-acetylalanine. One can recognise a Thioredoxin domain in the interval 2 to 113 (AGEGEVIACH…INEKLMKHGG (112 aa)). Active-site nucleophile residues include cysteine 39 and cysteine 42. Residues cysteine 39 and cysteine 42 are joined by a disulfide bond.

This sequence belongs to the thioredoxin family. Plant H-type subfamily. Interacts with MDH1.

It is found in the cytoplasm. Thiol-disulfide oxidoreductase involved in response to pathogens and oxidative stresses. Required for the response to victorin, a phytotoxin which induces programmed cell death in sensitive plants. Possesses insulin disulfide bonds reducing activity. The polypeptide is Thioredoxin H5 (TRX5) (Arabidopsis thaliana (Mouse-ear cress)).